The sequence spans 456 residues: Glycerol-3-phosphate dehydrogenase [NAD(+)] At3g07690, cytosolic (456 aa).

NAD(+) is bound by residues 41-46 (GAGAWG), Lys-189, and Ala-228. Lys-189 serves as a coordination point for substrate. Lys-278 serves as the catalytic Proton acceptor. Arg-340 and Gln-368 together coordinate NAD(+). A substrate-binding site is contributed by 340–341 (RN).

Belongs to the NAD-dependent glycerol-3-phosphate dehydrogenase family. As to quaternary structure, homodimer.

It localises to the cytoplasm. The enzyme catalyses sn-glycerol 3-phosphate + NAD(+) = dihydroxyacetone phosphate + NADH + H(+). Functionally, required for glycerol-3-phosphate (G3P) accumulation during systemic acquired resistance (SAR) establishment. This Arabidopsis thaliana (Mouse-ear cress) protein is Glycerol-3-phosphate dehydrogenase [NAD(+)] At3g07690, cytosolic.